Here is a 164-residue protein sequence, read N- to C-terminus: MASIAVCPGSFDPVTFGHLDIIRRGAKVFDKVYVCVLNNSSKKPLFTVEERCGLLREVTQDIPNVQVESFQGLLIDYAKSKQANVILRGLRAVSDFEYEMQGTSMNKVLDENIETFFMMTNNQYSFLSSSIVKEVAKYKGSVAELVPEAVEAALEKKFAKNERP.

Substrate is bound at residue S10. Residues 10 to 11 (SF) and H18 contribute to the ATP site. 3 residues coordinate substrate: K42, L74, and R88. Residues 89–91 (GLR), E99, and 124–130 (YSFLSSS) contribute to the ATP site.

It belongs to the bacterial CoaD family. Homohexamer. Mg(2+) serves as cofactor.

The protein localises to the cytoplasm. The enzyme catalyses (R)-4'-phosphopantetheine + ATP + H(+) = 3'-dephospho-CoA + diphosphate. The protein operates within cofactor biosynthesis; coenzyme A biosynthesis; CoA from (R)-pantothenate: step 4/5. Its function is as follows. Reversibly transfers an adenylyl group from ATP to 4'-phosphopantetheine, yielding dephospho-CoA (dPCoA) and pyrophosphate. The sequence is that of Phosphopantetheine adenylyltransferase from Bacillus licheniformis (strain ATCC 14580 / DSM 13 / JCM 2505 / CCUG 7422 / NBRC 12200 / NCIMB 9375 / NCTC 10341 / NRRL NRS-1264 / Gibson 46).